A 138-amino-acid chain; its full sequence is Small ribosomal subunit protein uS11c (138 aa).

The tract at residues 1-23 is disordered; it reads MAKAIPRVGSRKNGRISSRKSAR. Positions 9–23 are enriched in basic residues; sequence GSRKNGRISSRKSAR.

This sequence belongs to the universal ribosomal protein uS11 family. Part of the 30S ribosomal subunit.

Its subcellular location is the plastid. It is found in the chloroplast. The chain is Small ribosomal subunit protein uS11c from Coffea arabica (Arabian coffee).